The following is a 1009-amino-acid chain: DENN domain-containing protein 2A (1009 aa).

Disordered regions lie at residues 15-153, 171-334, 434-479, and 498-532; these read AEAS…LRFQ, KDGS…HRKS, KLLD…KKRK, and KRVK…LKAH. Composition is skewed to basic and acidic residues over residues 45–59, 130–147, 218–247, and 275–284; these read NIKD…KKEV, QPER…EPRL, HPSD…DRSL, and HAGEGDKDGK. The span at 297–314 shows a compositional bias: pro residues; sequence PPLPSLPPPPLPSSPPPS. Basic and acidic residues predominate over residues 434 to 443; it reads KLLDTRKLSR. Over residues 503–513 the composition is skewed to polar residues; sequence LSQSMESNSGK. Phosphoserine is present on Ser551. The uDENN domain occupies 566–715; that stretch reads EYFVVVSLHK…PFPALGKTIL (150 aa). The 134-residue stretch at 737-870 folds into the cDENN domain; that stretch reads RLEHVDFESL…LQVALEHILE (134 aa). The 98-residue stretch at 872–969 folds into the dDENN domain; it reads RNELACEQDE…QERELRRQDA (98 aa).

It localises to the cytoplasm. It is found in the cytoskeleton. Guanine nucleotide exchange factor (GEF) which may activate RAB9A and RAB9B. Promotes the exchange of GDP to GTP, converting inactive GDP-bound Rab proteins into their active GTP-bound form. May play a role in late endosomes back to trans-Golgi network/TGN transport. This chain is DENN domain-containing protein 2A (DENND2A), found in Homo sapiens (Human).